The sequence spans 74 residues: MGKKHVIVKPNARQASVSITPAGQLLVTVRAPASDGQANQELIALLAAYFGVPKSRIQLVKGHTSRHKVIELLD.

It belongs to the UPF0235 family.

In Thermosynechococcus vestitus (strain NIES-2133 / IAM M-273 / BP-1), this protein is UPF0235 protein tsr1994.